The chain runs to 465 residues: GDNF family receptor alpha-1 (465 aa).

Positions 1–24 (MFLATLYFALPLLDLLLSAEVSGG) are cleaved as a signal peptide. 3 consecutive repeat copies span residues 25–113 (DRLD…LQGN), 150–238 (KGNN…YEER), and 239–342 (EKPN…KNAI). A disulfide bridge links C36 with C42. N59 carries an N-linked (GlcNAc...) asparagine glycan. 10 disulfides stabilise this stretch: C154–C214, C161–C167, C178–C192, C187–C233, C216–C221, C243–C313, C250–C256, C267–C285, C277–C337, and C315–C325. Residues N347 and N406 are each glycosylated (N-linked (GlcNAc...) asparagine). S429 carries GPI-anchor amidated serine lipidation. Residues 430–465 (HITTKSMAAPPSCGLSPLLVLVVTALSTLLSLTETS) constitute a propeptide, removed in mature form.

Belongs to the GDNFR family. In terms of assembly, interacts with GDNF ligand and RET: forms a 2:2:2 ternary complex composed of GDNF ligand, GFRA1 and RET receptor. Interacts with SORL1, either alone or in complex with GDNF. Interaction between SORL1 and GFRA1 leads to GFRA1 internalization, but not degradation.

It is found in the cell membrane. The protein localises to the golgi apparatus. Its subcellular location is the trans-Golgi network. The protein resides in the endosome. It localises to the multivesicular body. Its function is as follows. Coreceptor for GDNF, a neurotrophic factor that enhances survival and morphological differentiation of dopaminergic neurons and increases their high-affinity dopamine uptake. GDNF-binding leads to autophosphorylation and activation of the RET receptor. This is GDNF family receptor alpha-1 (GFRA1) from Homo sapiens (Human).